Here is a 297-residue protein sequence, read N- to C-terminus: uncharacterized protein (297 aa).

The protein belongs to the metallo-dependent hydrolases superfamily.

This is an uncharacterized protein from Sinorhizobium fredii (strain NBRC 101917 / NGR234).